The chain runs to 1357 residues: DNA-directed RNA polymerase subunit beta (1357 aa).

This sequence belongs to the RNA polymerase beta chain family. The RNAP catalytic core consists of 2 alpha, 1 beta, 1 beta' and 1 omega subunit. When a sigma factor is associated with the core the holoenzyme is formed, which can initiate transcription.

The catalysed reaction is RNA(n) + a ribonucleoside 5'-triphosphate = RNA(n+1) + diphosphate. Functionally, DNA-dependent RNA polymerase catalyzes the transcription of DNA into RNA using the four ribonucleoside triphosphates as substrates. This is DNA-directed RNA polymerase subunit beta from Pseudomonas entomophila (strain L48).